The following is a 130-amino-acid chain: uncharacterized protein (130 aa).

Residues 85–116 are disordered; the sequence is NDSDDDCSENDSDGDCSENDSDNDYSENESDC.

The protein belongs to the mimivirus L5 family.

This is an uncharacterized protein from Acanthamoeba polyphaga mimivirus (APMV).